A 334-amino-acid polypeptide reads, in one-letter code: Heat-inducible transcription repressor HrcA (334 aa).

The protein belongs to the HrcA family.

Negative regulator of class I heat shock genes (grpE-dnaK-dnaJ and groELS operons). Prevents heat-shock induction of these operons. This chain is Heat-inducible transcription repressor HrcA, found in Acidovorax sp. (strain JS42).